We begin with the raw amino-acid sequence, 436 residues long: Enolase (436 aa).

Q163 contacts (2R)-2-phosphoglycerate. E205 (proton donor) is an active-site residue. Positions 242, 285, and 312 each coordinate Mg(2+). Positions 337, 366, 367, and 388 each coordinate (2R)-2-phosphoglycerate. K337 (proton acceptor) is an active-site residue.

It belongs to the enolase family. It depends on Mg(2+) as a cofactor.

The protein localises to the cytoplasm. It is found in the secreted. The protein resides in the cell surface. The enzyme catalyses (2R)-2-phosphoglycerate = phosphoenolpyruvate + H2O. It functions in the pathway carbohydrate degradation; glycolysis; pyruvate from D-glyceraldehyde 3-phosphate: step 4/5. In terms of biological role, catalyzes the reversible conversion of 2-phosphoglycerate (2-PG) into phosphoenolpyruvate (PEP). It is essential for the degradation of carbohydrates via glycolysis. The chain is Enolase from Solidesulfovibrio magneticus (strain ATCC 700980 / DSM 13731 / RS-1) (Desulfovibrio magneticus).